The chain runs to 390 residues: Chorismate synthase 2 (390 aa).

Arg-39 and Arg-45 together coordinate NADP(+). Residues 132-134 (RSS), 253-254 (NA), Gly-298, 313-317 (KPIPT), and Arg-339 contribute to the FMN site.

It belongs to the chorismate synthase family. In terms of assembly, homotetramer. FMNH2 serves as cofactor.

It carries out the reaction 5-O-(1-carboxyvinyl)-3-phosphoshikimate = chorismate + phosphate. The protein operates within metabolic intermediate biosynthesis; chorismate biosynthesis; chorismate from D-erythrose 4-phosphate and phosphoenolpyruvate: step 7/7. Its function is as follows. Catalyzes the anti-1,4-elimination of the C-3 phosphate and the C-6 proR hydrogen from 5-enolpyruvylshikimate-3-phosphate (EPSP) to yield chorismate, which is the branch point compound that serves as the starting substrate for the three terminal pathways of aromatic amino acid biosynthesis. This reaction introduces a second double bond into the aromatic ring system. The polypeptide is Chorismate synthase 2 (Bacillus thuringiensis subsp. konkukian (strain 97-27)).